Here is a 273-residue protein sequence, read N- to C-terminus: 4-hydroxy-tetrahydrodipicolinate reductase (273 aa).

NAD(+)-binding positions include Gly12–Met17 and Glu38. Position 39 (Arg39) interacts with NADP(+). NAD(+) contacts are provided by residues Gly102–Thr104 and Ala126–Phe129. The active-site Proton donor/acceptor is the His159. His160 provides a ligand contact to (S)-2,3,4,5-tetrahydrodipicolinate. Lys163 (proton donor) is an active-site residue. (S)-2,3,4,5-tetrahydrodipicolinate is bound at residue Gly169–Thr170.

Belongs to the DapB family. Homotetramer.

The protein resides in the cytoplasm. It catalyses the reaction (S)-2,3,4,5-tetrahydrodipicolinate + NAD(+) + H2O = (2S,4S)-4-hydroxy-2,3,4,5-tetrahydrodipicolinate + NADH + H(+). It carries out the reaction (S)-2,3,4,5-tetrahydrodipicolinate + NADP(+) + H2O = (2S,4S)-4-hydroxy-2,3,4,5-tetrahydrodipicolinate + NADPH + H(+). It functions in the pathway amino-acid biosynthesis; L-lysine biosynthesis via DAP pathway; (S)-tetrahydrodipicolinate from L-aspartate: step 4/4. Catalyzes the conversion of 4-hydroxy-tetrahydrodipicolinate (HTPA) to tetrahydrodipicolinate. The chain is 4-hydroxy-tetrahydrodipicolinate reductase from Escherichia coli O157:H7.